We begin with the raw amino-acid sequence, 448 residues long: MKLKSLIKSTSDWFSSTPERALNRAYKSALKIQEIETKHFRGQKVSRENADYGASVITYFETEVQSYLQKINMELTVFKASRLFLSLSNLQDTENNLGTGKVKSEQETTAIIIFDKLKFIDEVIAKYKSNAIEKNVSNNVAIIAASERNPEVTNSAPSGKKSTKVKDQGVKNKTINFESASQKTGVLPRSFMNTLNKIKQEIDPKSGESEEQVLTKYRKSRYRTALSIKFILLLIIIPLLIHQLTKTFFLIPVVEQYFSRHEQVIFINRDLEDEALEELQHYEETLHFRGLIGLGPELSPEKIEQEVKQKAGEITEEYRRHGIDSIANIFADLFSFIAFVLVLVNSKKEIEVVKSFLDEILYGLSDPAKAFLIILFTDMFVGFHSPHGWEVILEGVAHHFGLPENREFNFLFIATFPVILDTVLKYWIFRYLNRISPSAVATYKNMNE.

The next 4 membrane-spanning stretches (helical) occupy residues 231–251, 323–343, 372–392, and 408–428; these read ILLL…FFLI, IDSI…VLVL, LIIL…WEVI, and FNFL…KYWI.

Belongs to the CemA family.

The protein resides in the cell inner membrane. Its function is as follows. Required for H(+) efflux immediately after light irradiation to form a rapid H(+) concentration gradient across the thylakoid membranes. Together with PxcL, contributes to transient H(+) uptake following dark to light transition. The protein is Proton extrusion protein PxcA of Rippkaea orientalis (strain PCC 8801 / RF-1) (Cyanothece sp. (strain PCC 8801)).